Consider the following 326-residue polypeptide: Guanine nucleotide-binding protein subunit beta-like protein 1 (326 aa).

WD repeat units follow at residues 17–61 (GTQS…IVTT), 64–104 (GHGG…NTIM), 159–202 (ARPG…VCSQ), 205–244 (CHEE…SLQV), 250–291 (LTNP…AVLA), and 292–325 (FHSA…LYPC).

In terms of tissue distribution, expressed at low levels in most tissues and highly expressed in adult testis. Widely expressed in adult brain with striking regional distribution in forebrain, midbrain, and hindbrain structures, including the thalamus, hypothalamus, amygdala, hippocampus, pons.

The protein resides in the cytoplasm. It localises to the nucleus. Acts as a critical regulator of DNA damage response (DDR) signaling via specifically regulating phosphatidylinositol 3-kinase-related protein kinase (PIKK) family proteins. This is Guanine nucleotide-binding protein subunit beta-like protein 1 (Gnb1l) from Mus musculus (Mouse).